Reading from the N-terminus, the 653-residue chain is Mannosyl-oligosaccharide 1,2-alpha-mannosidase IA (653 aa).

Residues 1 to 41 (MPVGGLLPLFSSPAGGVLGGGLGGGGGRKGSGPAALRLTEK) lie on the Cytoplasmic side of the membrane. A helical; Signal-anchor for type II membrane protein transmembrane segment spans residues 42–62 (FVLLLVFSAFITLCFGAIFFL). Residues 63–653 (PDSSKLLSGV…DKKEVEIREE (591 aa)) are Lumenal-facing. A disordered region spans residues 81 to 116 (QPAADHKPGPGARAEDAAEGRARRREEGAPGDPEAA). A compositionally biased stretch (basic and acidic residues) spans 84 to 108 (ADHKPGPGARAEDAAEGRARRREEG). Residues Cys-476 and Cys-508 are joined by a disulfide bond. N-linked (GlcNAc...) asparagine glycosylation is present at Asn-513. The active-site Proton donor is Glu-522.

This sequence belongs to the glycosyl hydrolase 47 family. Ca(2+) serves as cofactor.

It localises to the golgi apparatus membrane. The enzyme catalyses N(4)-(alpha-D-Man-(1-&gt;2)-alpha-D-Man-(1-&gt;2)-alpha-D-Man-(1-&gt;3)-[alpha-D-Man-(1-&gt;2)-alpha-D-Man-(1-&gt;3)-[alpha-D-Man-(1-&gt;2)-alpha-D-Man-(1-&gt;6)]-alpha-D-Man-(1-&gt;6)]-beta-D-Man-(1-&gt;4)-beta-D-GlcNAc-(1-&gt;4)-beta-D-GlcNAc)-L-asparaginyl-[protein] (N-glucan mannose isomer 9A1,2,3B1,2,3) + 4 H2O = N(4)-(alpha-D-Man-(1-&gt;3)-[alpha-D-Man-(1-&gt;3)-[alpha-D-Man-(1-&gt;6)]-alpha-D-Man-(1-&gt;6)]-beta-D-Man-(1-&gt;4)-beta-D-GlcNAc-(1-&gt;4)-beta-D-GlcNAc)-L-asparaginyl-[protein] (N-glucan mannose isomer 5A1,2) + 4 beta-D-mannose. It catalyses the reaction N(4)-(alpha-D-Man-(1-&gt;2)-alpha-D-Man-(1-&gt;2)-alpha-D-Man-(1-&gt;3)-[alpha-D-Man-(1-&gt;3)-[alpha-D-Man-(1-&gt;2)-alpha-D-Man-(1-&gt;6)]-alpha-D-Man-(1-&gt;6)]-beta-D-Man-(1-&gt;4)-beta-D-GlcNAc-(1-&gt;4)-beta-D-GlcNAc)-L-asparaginyl-[protein] (N-glucan mannose isomer 8A1,2,3B1,3) + 3 H2O = N(4)-(alpha-D-Man-(1-&gt;3)-[alpha-D-Man-(1-&gt;3)-[alpha-D-Man-(1-&gt;6)]-alpha-D-Man-(1-&gt;6)]-beta-D-Man-(1-&gt;4)-beta-D-GlcNAc-(1-&gt;4)-beta-D-GlcNAc)-L-asparaginyl-[protein] (N-glucan mannose isomer 5A1,2) + 3 beta-D-mannose. It functions in the pathway protein modification; protein glycosylation. Inhibited by both 1-deoxymannojirimycin and kifunensine. Involved in the maturation of Asn-linked oligosaccharides. Progressively trim alpha-1,2-linked mannose residues from Man(9)GlcNAc(2) to produce Man(5)GlcNAc(2). The protein is Mannosyl-oligosaccharide 1,2-alpha-mannosidase IA (MAN1A1) of Homo sapiens (Human).